The chain runs to 142 residues: Hemoglobin subunit alpha (142 aa).

Residue Ser1 is modified to N-acetylserine. The Globin domain occupies 1–142 (SLSDKDKNTV…LALALSERYR (142 aa)). An O2-binding site is contributed by His59. His88 lines the heme b pocket.

It belongs to the globin family. As to quaternary structure, heterotetramer of two alpha chains and two beta chains. Can form polymers. Red blood cells.

In terms of biological role, involved in oxygen transport from gills to the various peripheral tissues. The chain is Hemoglobin subunit alpha (hba) from Chelidonichthys kumu (Bluefin gurnard).